A 226-amino-acid chain; its full sequence is Ribonuclease 3 (226 aa).

In terms of domain architecture, RNase III spans 6 to 128; sequence INRLQRKLGY…LIGGVFLDSN (123 aa). Glu-41 contacts Mg(2+). Asp-45 is an active-site residue. Asp-114 and Glu-117 together coordinate Mg(2+). Residue Glu-117 is part of the active site. Residues 155 to 225 form the DRBM domain; the sequence is DPKTRLQEYL…AEQALKKLEL (71 aa).

Belongs to the ribonuclease III family. As to quaternary structure, homodimer. Mg(2+) is required as a cofactor.

The protein resides in the cytoplasm. The enzyme catalyses Endonucleolytic cleavage to 5'-phosphomonoester.. Digests double-stranded RNA. Involved in the processing of primary rRNA transcript to yield the immediate precursors to the large and small rRNAs (23S and 16S). Processes some mRNAs, and tRNAs when they are encoded in the rRNA operon. Processes pre-crRNA and tracrRNA of type II CRISPR loci if present in the organism. The protein is Ribonuclease 3 of Salmonella enteritidis PT4 (strain P125109).